Reading from the N-terminus, the 281-residue chain is Secretory carrier-associated membrane protein 5 (281 aa).

Positions methionine 1–glycine 49 are disordered. Topologically, residues methionine 1–alanine 139 are cytoplasmic. Over residues asparagine 19–glycine 49 the composition is skewed to gly residues. Positions lysine 76–alanine 102 form a coiled coil. Helical transmembrane passes span serine 140–isoleucine 160, leucine 167–tyrosine 187, phenylalanine 202–alanine 222, and isoleucine 250–leucine 270. Over glutamine 271–lysine 281 the chain is Cytoplasmic.

This sequence belongs to the SCAMP family.

Its subcellular location is the cell membrane. It is found in the cytoplasmic vesicle. The protein resides in the secretory vesicle membrane. Probably involved in membrane trafficking. This chain is Secretory carrier-associated membrane protein 5 (SCAMP5), found in Oryza sativa subsp. japonica (Rice).